The following is a 376-amino-acid chain: tRNA-specific 2-thiouridylase MnmA (376 aa).

ATP-binding positions include 17-24 (GMSGGVDS) and M43. Residues 103–105 (NPD) are interaction with target base in tRNA. The active-site Nucleophile is the C108. C108 and C204 are oxidised to a cystine. G132 contacts ATP. An interaction with tRNA region spans residues 154-156 (KDQ). C204 (cysteine persulfide intermediate) is an active-site residue. The interval 316-317 (RY) is interaction with tRNA.

It belongs to the MnmA/TRMU family.

Its subcellular location is the cytoplasm. It catalyses the reaction S-sulfanyl-L-cysteinyl-[protein] + uridine(34) in tRNA + AH2 + ATP = 2-thiouridine(34) in tRNA + L-cysteinyl-[protein] + A + AMP + diphosphate + H(+). Functionally, catalyzes the 2-thiolation of uridine at the wobble position (U34) of tRNA, leading to the formation of s(2)U34. This Pseudomonas savastanoi pv. phaseolicola (strain 1448A / Race 6) (Pseudomonas syringae pv. phaseolicola (strain 1448A / Race 6)) protein is tRNA-specific 2-thiouridylase MnmA.